Here is a 62-residue protein sequence, read N- to C-terminus: Frontoxin III (62 aa).

4 cysteine pairs are disulfide-bonded: Cys-3/Cys-24, Cys-17/Cys-41, Cys-43/Cys-54, and Cys-55/Cys-60.

As to expression, expressed by the venom gland.

The protein resides in the secreted. Functionally, binds to muscle nicotinic acetylcholine receptor (nAChR) and inhibit acetylcholine from binding to the receptor, thereby impairing neuromuscular transmission. In Micrurus frontalis (Coral snake), this protein is Frontoxin III.